The primary structure comprises 974 residues: Short transient receptor potential channel 4 (974 aa).

Topologically, residues 1–324 (MAQFYYKRNV…YDEFPGWRRR (324 aa)) are cytoplasmic. ANK repeat units follow at residues 29-60 (LSPS…IYFK), 71-93 (RTAL…LSFN), 96-118 (VGDA…LLNH), and 141-165 (PDIT…VQKG). Positions 87–172 (ELLLSFNVYV…QKGVSVPRPH (86 aa)) are multimerization domain. Residues His172, Cys176, Cys178, and Cys181 each coordinate Zn(2+). A coiled-coil region spans residues 223–260 (LSWELQELSKVENEFKSEYEELSRQCKQFAKDLLDQTR). The tract at residues 254–304 (DLLDQTRSSRELEIILNYRDDNSLIEEQSGNDLARLKLAIKYRQKEFVAQP) is multimerization domain. The segment at residues 325–359 (HWAVKMVTCFIIGLLFPVFSVCYLIAPKSPLGLFI) is an intramembrane region (discontinuously helical). The Cytoplasmic segment spans residues 360 to 362 (RKP). The chain crosses the membrane as a helical span at residues 363-383 (FIKFICHTASYLTFLFLLLLA). The Extracellular portion of the chain corresponds to 384-403 (SQHIDRSDLNRQGPPPTIVE). The helical transmembrane segment at 404 to 418 (WMILPWVLGFIWGEI) threads the bilayer. Ca(2+)-binding residues include Glu417, Gln420, Asn435, and Asp438. The Cytoplasmic portion of the chain corresponds to 419–432 (KQMWDGGLQDYIHD). The helical transmembrane segment at 433–453 (WWNLMDFVMNSLYLATISLKI) threads the bilayer. Residues 454 to 475 (VAFVKYSALNPRESWDMWHPTL) lie on the Extracellular side of the membrane. The helical transmembrane segment at 476–498 (VAEALFAIANIFSSLRLISLFTA) threads the bilayer. Residues 499–511 (NSHLGPLQISLGR) are Cytoplasmic-facing. The chain crosses the membrane as a helical span at residues 512-534 (MLLDILKFLFIYCLVLLAFANGL). The Extracellular segment spans residues 535-599 (NQLYFYYEET…HEFTEFVGAT (65 aa)). A disulfide bridge links Cys549 with Cys554. Residues 600-620 (MFGTYNVISLVVLLNMLIAMM) traverse the membrane as a helical segment. Residues 615 to 974 (MLIAMMNNSY…AHEDYVTTRL (360 aa)) are interaction with ITPR1, ITPR2 and ITPR3. Residues 621 to 974 (NNSYQLIADH…AHEDYVTTRL (354 aa)) lie on the Cytoplasmic side of the membrane. Residues 765 to 787 (ANAASSADSDEKSQSEGNGKDKR) form a disordered region. Residues 773 to 784 (SDEKSQSEGNGK) show a composition bias toward basic and acidic residues. Tyr956 and Tyr969 each carry phosphotyrosine; by FYN. The PDZ-binding domain stretch occupies residues 972-974 (TRL).

Belongs to the transient receptor (TC 1.A.4) family. STrpC subfamily. TRPC4 sub-subfamily. Homotetramer. Heterotetramer with TRPC1 and/or TRPC5. Forms a heteromeric ion channel with TRPC1, with a 1:3 TRPC1:TRPC4 stoichiometry. Interacts with TRPC4AP. Isoform alpha but not isoform beta interacts with ITPR1, ITPR2 and ITPR3. Interacts with NHERF1. Interacts with MX1 and RNF24. Interacts (via CIRB domain) with SESTD1 (via the spectrin 1 repeat) and SPTBN5 (via C-terminus). Interacts with CDH5 and CTNNB1. Interacts (via protein 4.1-binding domain) with EPB41L2. Interacts with PLSCR1. As to expression, abundantly expressed in brain (hippocampal CA1 pyramidal neurons, dentate gyrus granule cells, and cerebral cortical neurons, and in the septal nuclei and the mitral layer of olfactory bulb). Lower levels are detected in other tissues.

Its subcellular location is the cell membrane. The catalysed reaction is Ca(2+)(in) = Ca(2+)(out). It catalyses the reaction Na(+)(in) = Na(+)(out). The enzyme catalyses Li(+)(in) = Li(+)(out). It carries out the reaction Cs(+)(in) = Cs(+)(out). With respect to regulation, may be operated by a phosphatidylinositol second messenger system activated by receptor tyrosine kinases or G-protein coupled receptors. May be activated by intracellular calcium store depletion. Forms a receptor-activated non-selective calcium permeant cation channel. Acts as a cell-cell contact-dependent endothelial calcium entry channel. Forms a homomeric ion channel or a heteromeric ion channel with TRPC1; the heteromeric ion channel has reduced calcium permeability compared to the homomeric channel. Also permeable to monovalent ions including sodium, lithium and cesium ions. This Mus musculus (Mouse) protein is Short transient receptor potential channel 4 (Trpc4).